The sequence spans 68 residues: UPF0337 protein RB10934 (68 aa).

Belongs to the UPF0337 (CsbD) family.

This Rhodopirellula baltica (strain DSM 10527 / NCIMB 13988 / SH1) protein is UPF0337 protein RB10934.